The sequence spans 461 residues: Methylenetetrahydrofolate--tRNA-(uracil-5-)-methyltransferase TrmFO (461 aa).

Position 16–21 (16–21) interacts with FAD; sequence GAGLAG.

It belongs to the MnmG family. TrmFO subfamily. FAD serves as cofactor.

The protein resides in the cytoplasm. The catalysed reaction is uridine(54) in tRNA + (6R)-5,10-methylene-5,6,7,8-tetrahydrofolate + NADH + H(+) = 5-methyluridine(54) in tRNA + (6S)-5,6,7,8-tetrahydrofolate + NAD(+). It catalyses the reaction uridine(54) in tRNA + (6R)-5,10-methylene-5,6,7,8-tetrahydrofolate + NADPH + H(+) = 5-methyluridine(54) in tRNA + (6S)-5,6,7,8-tetrahydrofolate + NADP(+). Catalyzes the folate-dependent formation of 5-methyl-uridine at position 54 (M-5-U54) in all tRNAs. The protein is Methylenetetrahydrofolate--tRNA-(uracil-5-)-methyltransferase TrmFO of Parasynechococcus marenigrum (strain WH8102).